A 348-amino-acid polypeptide reads, in one-letter code: Nicotinate-nucleotide--dimethylbenzimidazole phosphoribosyltransferase (348 aa).

Glu-317 acts as the Proton acceptor in catalysis.

It belongs to the CobT family.

It carries out the reaction 5,6-dimethylbenzimidazole + nicotinate beta-D-ribonucleotide = alpha-ribazole 5'-phosphate + nicotinate + H(+). Its pathway is nucleoside biosynthesis; alpha-ribazole biosynthesis; alpha-ribazole from 5,6-dimethylbenzimidazole: step 1/2. Catalyzes the synthesis of alpha-ribazole-5'-phosphate from nicotinate mononucleotide (NAMN) and 5,6-dimethylbenzimidazole (DMB). This is Nicotinate-nucleotide--dimethylbenzimidazole phosphoribosyltransferase from Clostridioides difficile (strain 630) (Peptoclostridium difficile).